The following is a 392-amino-acid chain: Probable protein phosphatase 2C 29 (392 aa).

The PPM-type phosphatase domain occupies 44-353 (DYSVAVAQAN…DDITVVVLFL (310 aa)). Mn(2+)-binding residues include D75, G76, D285, and D344. The interval 360-392 (AGRGDEIDGTDGPVDVFSLSPDDREDPTRPVLR) is disordered.

This sequence belongs to the PP2C family. The cofactor is Mg(2+). Requires Mn(2+) as cofactor.

It carries out the reaction O-phospho-L-seryl-[protein] + H2O = L-seryl-[protein] + phosphate. The catalysed reaction is O-phospho-L-threonyl-[protein] + H2O = L-threonyl-[protein] + phosphate. The polypeptide is Probable protein phosphatase 2C 29 (Oryza sativa subsp. japonica (Rice)).